We begin with the raw amino-acid sequence, 337 residues long: D-lactate dehydrogenase (337 aa).

NAD(+)-binding positions include 156–157 (HI), Asp176, 207–208 (VP), Asn213, 234–236 (CSR), and Asp260. The active site involves Arg236. Glu265 is an active-site residue. His297 (proton donor) is an active-site residue.

The protein belongs to the D-isomer specific 2-hydroxyacid dehydrogenase family. Homodimer.

The enzyme catalyses (R)-lactate + NAD(+) = pyruvate + NADH + H(+). This is D-lactate dehydrogenase from Lactobacillus helveticus (Lactobacillus suntoryeus).